A 196-amino-acid polypeptide reads, in one-letter code: MPIGVPKVPFRSPGEEDASWVDVYNRLYRERLLFLGQEVDSEISNQLIGLMVYLSIEDETKDLYLFINSPGGWVIPGVAIYDTMQFVRPDVHTICMGLAASMGSFILVGGEITKRLAFPHARVMIHQPASSFYEAQTGEFVLEAEELLKLRETLTRVYVQRTGKPLWVVSEDMERDVFMSATEAQAYGIVDLVAVE.

Residue Ser-101 is the Nucleophile of the active site. His-126 is a catalytic residue.

This sequence belongs to the peptidase S14 family. As to quaternary structure, component of the chloroplastic Clp protease core complex.

The protein localises to the plastid. It localises to the chloroplast stroma. The catalysed reaction is Hydrolysis of proteins to small peptides in the presence of ATP and magnesium. alpha-casein is the usual test substrate. In the absence of ATP, only oligopeptides shorter than five residues are hydrolyzed (such as succinyl-Leu-Tyr-|-NHMec, and Leu-Tyr-Leu-|-Tyr-Trp, in which cleavage of the -Tyr-|-Leu- and -Tyr-|-Trp bonds also occurs).. Functionally, cleaves peptides in various proteins in a process that requires ATP hydrolysis. Has a chymotrypsin-like activity. Plays a major role in the degradation of misfolded proteins. This chain is ATP-dependent Clp protease proteolytic subunit, found in Nicotiana tabacum (Common tobacco).